Here is a 258-residue protein sequence, read N- to C-terminus: Type II restriction enzyme HindII (258 aa).

The catalysed reaction is Endonucleolytic cleavage of DNA to give specific double-stranded fragments with terminal 5'-phosphates.. A P subtype restriction enzyme that recognizes the double-stranded sequence 5'-GTYRAC-3' and cleaves after Y-3. The polypeptide is Type II restriction enzyme HindII (hindIIR) (Haemophilus influenzae (strain ATCC 51907 / DSM 11121 / KW20 / Rd)).